Here is a 310-residue protein sequence, read N- to C-terminus: Ribose-phosphate pyrophosphokinase (310 aa).

ATP is bound by residues 34 to 36 and 93 to 94; these read DQE and RQ. H127 and D167 together coordinate Mg(2+). Residue K190 is part of the active site. D-ribose 5-phosphate-binding positions include R192, D216, and 220-224; that span reads DSGGT.

It belongs to the ribose-phosphate pyrophosphokinase family. Class I subfamily. Homohexamer. Mg(2+) serves as cofactor.

It is found in the cytoplasm. It carries out the reaction D-ribose 5-phosphate + ATP = 5-phospho-alpha-D-ribose 1-diphosphate + AMP + H(+). The protein operates within metabolic intermediate biosynthesis; 5-phospho-alpha-D-ribose 1-diphosphate biosynthesis; 5-phospho-alpha-D-ribose 1-diphosphate from D-ribose 5-phosphate (route I): step 1/1. In terms of biological role, involved in the biosynthesis of the central metabolite phospho-alpha-D-ribosyl-1-pyrophosphate (PRPP) via the transfer of pyrophosphoryl group from ATP to 1-hydroxyl of ribose-5-phosphate (Rib-5-P). This is Ribose-phosphate pyrophosphokinase from Agrobacterium fabrum (strain C58 / ATCC 33970) (Agrobacterium tumefaciens (strain C58)).